We begin with the raw amino-acid sequence, 186 residues long: UPF0301 protein CV_3909 (186 aa).

The protein belongs to the UPF0301 (AlgH) family.

The sequence is that of UPF0301 protein CV_3909 from Chromobacterium violaceum (strain ATCC 12472 / DSM 30191 / JCM 1249 / CCUG 213 / NBRC 12614 / NCIMB 9131 / NCTC 9757 / MK).